The following is a 157-amino-acid chain: Protein-export protein SecB (157 aa).

The protein belongs to the SecB family. Homotetramer, a dimer of dimers. One homotetramer interacts with 1 SecA dimer.

It localises to the cytoplasm. One of the proteins required for the normal export of preproteins out of the cell cytoplasm. It is a molecular chaperone that binds to a subset of precursor proteins, maintaining them in a translocation-competent state. It also specifically binds to its receptor SecA. This Rhodopseudomonas palustris (strain TIE-1) protein is Protein-export protein SecB.